Here is a 201-residue protein sequence, read N- to C-terminus: 3-isopropylmalate dehydratase small subunit (201 aa).

The protein belongs to the LeuD family. LeuD type 1 subfamily. As to quaternary structure, heterodimer of LeuC and LeuD.

The enzyme catalyses (2R,3S)-3-isopropylmalate = (2S)-2-isopropylmalate. It participates in amino-acid biosynthesis; L-leucine biosynthesis; L-leucine from 3-methyl-2-oxobutanoate: step 2/4. Catalyzes the isomerization between 2-isopropylmalate and 3-isopropylmalate, via the formation of 2-isopropylmaleate. The chain is 3-isopropylmalate dehydratase small subunit from Thermus thermophilus (strain ATCC BAA-163 / DSM 7039 / HB27).